Reading from the N-terminus, the 423-residue chain is COP9 signalosome complex subunit 3 (423 aa).

The PCI domain occupies 197–365 (NFERAMYFYE…GMVCFHDSPE (169 aa)). A compositionally biased stretch (polar residues) spans 401–410 (PQFVQKSMGS). The disordered stretch occupies residues 401–423 (PQFVQKSMGSQEDDSGSKPSSYS).

It belongs to the CSN3 family. As to quaternary structure, component of the CSN complex, probably composed of cops1, cops2, cops3, cops4, cops5, cops6, cops7, cops8 and cops9.

The protein resides in the cytoplasm. It is found in the nucleus. Functionally, component of the COP9 signalosome complex (CSN), a complex involved in various cellular and developmental processes. The CSN complex is an essential regulator of the ubiquitin (Ubl) conjugation pathway by mediating the deneddylation of the cullin subunits of E3 ligase complexes, leading to modify the Ubl ligase activity. The protein is COP9 signalosome complex subunit 3 (cops3) of Xenopus laevis (African clawed frog).